The sequence spans 667 residues: Interleukin-17 receptor E (667 aa).

The first 23 residues, 1–23 (MGSSRLAALLLPLLLIVIDLSDS), serve as a signal peptide directing secretion. Residues 24-454 (AGIGFRHLPH…LLCPDVSYRH (431 aa)) lie on the Extracellular side of the membrane. The disordered stretch occupies residues 126–174 (LPRRHLSEKSHHISIPSPDISHKGLRSKRTQPSDPETWESLPRLDSQRH). 3 N-linked (GlcNAc...) asparagine glycosylation sites follow: N318, N347, and N364. The helical transmembrane segment at 455–475 (LGLLILALLALLTLLGVVLAL) threads the bilayer. Topologically, residues 476–667 (TCRRPQSGPG…REAARLADLG (192 aa)) are cytoplasmic. The SEFIR domain maps to 487-624 (ARPVLLLHAA…LLRDLPRLLR (138 aa)).

As to quaternary structure, forms heterodimers with IL17RA; the heterodimer binds IL17C. Predominantly expressed in mucosal tissues with high levels in keratinocytes and colon epithelial cells. Very low expression in dermal fibroblasts. Expressed in various tumor cell lines.

It localises to the cell membrane. It is found in the cytoplasm. The protein resides in the secreted. Specific functional receptor for IL17C. May be signaling through the NF-kappa-B and MAPK pathways. May require TRAF3IP2 /ACT1 for signaling. May be a crucial regulator in innate immunity to bacterial pathogens. Isoform 2 and isoform 4 may be either cytoplasmic inactive or dominant active forms. Isoform 3 and isoform 5 may act as soluble decoy receptors. The polypeptide is Interleukin-17 receptor E (IL17RE) (Homo sapiens (Human)).